The primary structure comprises 131 residues: Large ribosomal subunit protein bL17 (131 aa).

Belongs to the bacterial ribosomal protein bL17 family. As to quaternary structure, part of the 50S ribosomal subunit. Contacts protein L32.

The polypeptide is Large ribosomal subunit protein bL17 (Azoarcus sp. (strain BH72)).